The following is a 751-amino-acid chain: Protein WEAK CHLOROPLAST MOVEMENT UNDER BLUE LIGHT-like 3 (751 aa).

S113 carries the post-translational modification Phosphoserine. Coiled-coil stretches lie at residues 165 to 558 (ERRK…ALQE) and 588 to 647 (QALE…KARD). Composition is skewed to basic and acidic residues over residues 455 to 467 (RERQ…KQKE) and 625 to 689 (NREM…RNKE). 2 disordered regions span residues 455–479 (RERQ…DKDA) and 625–751 (NREM…HSHK). The segment covering 704 to 723 (GSSSNNTGGSTTTNNNNLTP) has biased composition (low complexity).

It belongs to the WEB family.

This chain is Protein WEAK CHLOROPLAST MOVEMENT UNDER BLUE LIGHT-like 3 (WEL3), found in Arabidopsis thaliana (Mouse-ear cress).